We begin with the raw amino-acid sequence, 89 residues long: Acyl carrier protein MbtL (89 aa).

Residues E7–V82 form the Carrier domain. S42 is subject to O-(pantetheine 4'-phosphoryl)serine.

In terms of processing, 4'-phosphopantetheine is transferred from CoA to a specific serine of apo-ACP, leading to the activated holo-ACP form.

The protein localises to the cytoplasm. Its pathway is siderophore biosynthesis; mycobactin biosynthesis. Functionally, acyl carrier protein involved in the formation of acyl-S-ACP intermediates within the mycobactin biosynthesis process. This is Acyl carrier protein MbtL (mbtL) from Mycobacterium sp. (strain MCS).